A 118-amino-acid polypeptide reads, in one-letter code: Large ribosomal subunit protein uL18 (118 aa).

The protein belongs to the universal ribosomal protein uL18 family. Part of the 50S ribosomal subunit; part of the 5S rRNA/L5/L18/L25 subcomplex. Contacts the 5S and 23S rRNAs.

In terms of biological role, this is one of the proteins that bind and probably mediate the attachment of the 5S RNA into the large ribosomal subunit, where it forms part of the central protuberance. In Rickettsia typhi (strain ATCC VR-144 / Wilmington), this protein is Large ribosomal subunit protein uL18.